Reading from the N-terminus, the 215-residue chain is Programmed cell death protein 10 homolog (215 aa).

The protein belongs to the PDCD10 family. In terms of assembly, interacts with gck-1. In terms of tissue distribution, expressed in pharynx, intestine, germline, vulva and excretory canals.

It is found in the cytoplasm. Its subcellular location is the apical cell membrane. Involved in excretory canal elongation during postembryonic development. Plays a role in promoting Golgi stability, ER integrity and vesicle transport probably by regulating the activation of Rho GTPase cdc-42. Involved in fertility. This Caenorhabditis elegans protein is Programmed cell death protein 10 homolog.